The following is a 272-amino-acid chain: R-spondin-3 (272 aa).

Positions 1–21 are cleaved as a signal peptide; it reads MHLRLISWLFIILNFMEYIGS. FU repeat units follow at residues 35–86 and 92–135; these read PNVS…GYYG and INKC…GLEA. Asn-36 carries N-linked (GlcNAc...) asparagine glycosylation. 11 cysteine pairs are disulfide-bonded: Cys-41–Cys-48, Cys-45–Cys-54, Cys-57–Cys-76, Cys-80–Cys-95, Cys-98–Cys-105, Cys-102–Cys-111, Cys-114–Cys-125, Cys-129–Cys-142, Cys-148–Cys-190, Cys-159–Cys-166, and Cys-199–Cys-206. Residues 147–207 enclose the TSP type-1 domain; that stretch reads HCEVSEWNPW…KCTVQRKKCQ (61 aa). The interval 201–272 is disordered; sequence VQRKKCQKGE…QKSVSVSTVH (72 aa). The span at 213-223 shows a compositional bias: basic residues; the sequence is KKGRERKRKKP. Residues 224-252 show a composition bias toward basic and acidic residues; it reads NKGESKEAIPDSKSLESSKEIPEQRENKQ.

It belongs to the R-spondin family. Interacts with the extracellular domain of FZD8 and LRP6. It however does not form a ternary complex with FZD8 and LRP6. Interacts with WNT1. Binds heparin. Interacts with LGR4, LGR5 and LGR6. As to expression, ubiquitously expressed. Expressed at higher level in placenta, small intestine, fetal thymus and lymph node. Highly expressed in endothelial cells.

The protein localises to the secreted. Functionally, activator of the canonical Wnt signaling pathway by acting as a ligand for LGR4-6 receptors, which acts as a key regulator of angiogenesis. Upon binding to LGR4-6 (LGR4, LGR5 or LGR6), LGR4-6 associate with phosphorylated LRP6 and frizzled receptors that are activated by extracellular Wnt receptors, triggering the canonical Wnt signaling pathway to increase expression of target genes. Also regulates the canonical Wnt/beta-catenin-dependent pathway and non-canonical Wnt signaling by acting as an inhibitor of ZNRF3, an important regulator of the Wnt signaling pathway. Acts as a ligand for frizzled FZD8 and LRP6. May negatively regulate the TGF-beta pathway. Acts as a key regulator of angiogenesis by controlling vascular stability and pruning: acts by activating the non-canonical Wnt signaling pathway in endothelial cells. Can also amplify Wnt signaling pathway independently of LGR4-6 receptors, possibly by acting as a direct antagonistic ligand to RNF43 and ZNRF3. In Homo sapiens (Human), this protein is R-spondin-3 (RSPO3).